The chain runs to 1075 residues: Ras-associating and dilute domain-containing protein (1075 aa).

Positions alanine 61–aspartate 164 constitute a Ras-associating domain. Residues glutamine 183 to glycine 237 are disordered. 4 positions are modified to phosphoserine: serine 206, serine 216, serine 219, and serine 221. Residues alanine 225–glutamate 234 are compositionally biased toward low complexity. The FHA domain occupies arginine 314–arginine 389. Serine 393 is subject to Phosphoserine. The 268-residue stretch at alanine 497–glutamate 764 folds into the Dilute domain. Residues arginine 872–serine 967 form a disordered region. Serine 890 carries the post-translational modification Phosphoserine. The segment covering serine 950 to serine 967 has biased composition (low complexity). The PDZ domain maps to threonine 976–aspartate 1061.

The protein belongs to the RADIL family. As to quaternary structure, interacts with RAP1A; in a GTP-dependent manner. Does not interact with members of the Ras family. Interacts (via PDZ domain) with KIF14; is recruited to the microtubule network restricting its interaction with activated RAP1A.

In terms of biological role, downstream effector of Rap required for cell adhesion and migration of neural crest precursors during development. The protein is Ras-associating and dilute domain-containing protein (RADIL) of Homo sapiens (Human).